A 412-amino-acid chain; its full sequence is Alanyl-tRNA editing protein Aarsd1-A (412 aa).

Zn(2+) contacts are provided by H108, H112, C208, and H212.

The protein belongs to the class-II aminoacyl-tRNA synthetase family. Alax-L subfamily. It depends on Zn(2+) as a cofactor.

Its subcellular location is the cytoplasm. In terms of biological role, functions in trans to edit the amino acid moiety from incorrectly charged tRNA(Ala). The polypeptide is Alanyl-tRNA editing protein Aarsd1-A (aarsd1-a) (Xenopus laevis (African clawed frog)).